The primary structure comprises 128 residues: Mediator of RNA polymerase II transcription subunit 31-A (128 aa).

This sequence belongs to the Mediator complex subunit 31 family. Component of the Mediator complex.

The protein localises to the nucleus. Component of the Mediator complex, a coactivator involved in the regulated transcription of nearly all RNA polymerase II-dependent genes. Mediator functions as a bridge to convey information from gene-specific regulatory proteins to the basal RNA polymerase II transcription machinery. Mediator is recruited to promoters by direct interactions with regulatory proteins and serves as a scaffold for the assembly of a functional preinitiation complex with RNA polymerase II and the general transcription factors. The protein is Mediator of RNA polymerase II transcription subunit 31-A (med31-a) of Xenopus laevis (African clawed frog).